Reading from the N-terminus, the 155-residue chain is Small ribosomal subunit protein uS7 (155 aa).

This sequence belongs to the universal ribosomal protein uS7 family. Part of the 30S ribosomal subunit. Contacts proteins S9 and S11.

Its function is as follows. One of the primary rRNA binding proteins, it binds directly to 16S rRNA where it nucleates assembly of the head domain of the 30S subunit. Is located at the subunit interface close to the decoding center, probably blocks exit of the E-site tRNA. This chain is Small ribosomal subunit protein uS7, found in Helicobacter hepaticus (strain ATCC 51449 / 3B1).